A 674-amino-acid chain; its full sequence is NADH-ubiquinone oxidoreductase chain 5 (674 aa).

17 helical membrane-spanning segments follow: residues 27-47, 81-101, 113-133, 135-155, 173-193, 200-220, 242-262, 275-295, 301-323, 325-345, 363-383, 410-430, 453-473, 514-534, 556-576, 616-636, and 639-659; these read GAHIITCSCLITSAILAIVAF, LTVSMLLPVLVVSSLVHIFSV, FFAYLSMFTFFMLVLVTGDNY, IMFVGWEGIGISSYLLINFWF, VGDMFLSIGFFAIFFVFGNLD, IAPFINETIITIIGLLLLLAA, TPVSALIHAATLVTAGVYLLL, LIVITWVGALTAFFAASTGLL, RVIAYSTCSQMGYLFMACGLSQY, VALFHLVNHAFFKALLFLAAG, LIGFLPFTYTAILIGSLSLIA, VAYWLGTLSACLTAFYSLRLI, TIVMIPLIILSLLAIFFGYVA, AIGTLLGAGLALYLYHMLPVF, YVDVIYNHYIIYGGLQLGYVI, ALYLAIALVTLIMILLSPVLL, and ALINAPLILVLLVAMVCIPYI.

This sequence belongs to the complex I subunit 5 family.

The protein localises to the mitochondrion inner membrane. It catalyses the reaction a ubiquinone + NADH + 5 H(+)(in) = a ubiquinol + NAD(+) + 4 H(+)(out). Functionally, core subunit of the mitochondrial membrane respiratory chain NADH dehydrogenase (Complex I) that is believed to belong to the minimal assembly required for catalysis. Complex I functions in the transfer of electrons from NADH to the respiratory chain. The immediate electron acceptor for the enzyme is believed to be ubiquinone. This Mycosarcoma maydis (Corn smut fungus) protein is NADH-ubiquinone oxidoreductase chain 5 (ND5).